Consider the following 553-residue polypeptide: Rhodopsin kinase GRK7 (553 aa).

Position 36 is a phosphoserine; by PKA (Ser36). The RGS domain maps to Phe56–Leu176. The region spanning Phe191–Phe454 is the Protein kinase domain. ATP is bound by residues Leu197–Val205 and Lys220. Residue Asp316 is the Proton acceptor of the active site. The AGC-kinase C-terminal domain occupies Lys455–Glu520. Cysteine methyl ester is present on Cys550. A lipid anchor (S-geranylgeranyl cysteine) is attached at Cys550. Positions Leu551–Leu553 are cleaved as a propeptide — removed in mature form.

Belongs to the protein kinase superfamily. AGC Ser/Thr protein kinase family. GPRK subfamily. Interacts (when prenylated) with PDE6D; this promotes release from membranes. Post-translationally, autophosphorylated in vitro at Ser-490. Phosphorylation at Ser-36 is regulated by light and activated by cAMP. As to expression, retinal cones, outer and inner segments.

The protein resides in the membrane. The enzyme catalyses L-threonyl-[rhodopsin] + ATP = O-phospho-L-threonyl-[rhodopsin] + ADP + H(+). The catalysed reaction is L-seryl-[rhodopsin] + ATP = O-phospho-L-seryl-[rhodopsin] + ADP + H(+). Its activity is regulated as follows. Inhibited by phosphorylation of Ser-36. In terms of biological role, retina-specific kinase involved in the shutoff of the photoresponse and adaptation to changing light conditions via cone opsin phosphorylation, including rhodopsin (RHO). This is Rhodopsin kinase GRK7 (GRK7) from Homo sapiens (Human).